Consider the following 142-residue polypeptide: Small ribosomal subunit protein uS12 (142 aa).

Residues 1–44 (MANGKYAARKLKKDRQKHRWSDTDYARRERGLGKKSDPLEGAPQ) are disordered. Over residues 7-18 (AARKLKKDRQKH) the composition is skewed to basic residues. The segment covering 19–38 (RWSDTDYARRERGLGKKSDP) has biased composition (basic and acidic residues).

The protein belongs to the universal ribosomal protein uS12 family. As to quaternary structure, part of the 30S ribosomal subunit.

Its function is as follows. With S4 and S5 plays an important role in translational accuracy. Located at the interface of the 30S and 50S subunits. The polypeptide is Small ribosomal subunit protein uS12 (Haloarcula marismortui (strain ATCC 43049 / DSM 3752 / JCM 8966 / VKM B-1809) (Halobacterium marismortui)).